The chain runs to 545 residues: Glucans biosynthesis protein G (545 aa).

The N-terminal stretch at 1–35 (MIRVSSAVQRHAQKLIVLFSLLFGASLLMSDNGFA) is a signal peptide.

Belongs to the OpgD/OpgG family.

It is found in the periplasm. The protein operates within glycan metabolism; osmoregulated periplasmic glucan (OPG) biosynthesis. Its function is as follows. Involved in the biosynthesis of osmoregulated periplasmic glucans (OPGs). This Vibrio cholerae serotype O1 (strain ATCC 39541 / Classical Ogawa 395 / O395) protein is Glucans biosynthesis protein G.